A 257-amino-acid chain; its full sequence is NAD-capped RNA hydrolase NudC (257 aa).

Arginine 69 serves as a coordination point for substrate. Cysteine 98 and cysteine 101 together coordinate Zn(2+). Glutamate 111 is a binding site for substrate. Positions 116 and 119 each coordinate Zn(2+). Residue tyrosine 124 coordinates substrate. The region spanning 125 to 248 (PQIAPCIIVA…TVARRLIEDT (124 aa)) is the Nudix hydrolase domain. Alanine 158, glutamate 174, and glutamate 178 together coordinate a divalent metal cation. Residues 159–180 (GFVEVGETLEQAVAREVMEESG) carry the Nudix box motif. Residue 192–199 (QPWPFPQS) participates in substrate binding. A divalent metal cation is bound at residue glutamate 219. Alanine 241 provides a ligand contact to substrate.

It belongs to the Nudix hydrolase family. NudC subfamily. As to quaternary structure, homodimer. It depends on Mg(2+) as a cofactor. Mn(2+) is required as a cofactor. The cofactor is Zn(2+).

It catalyses the reaction a 5'-end NAD(+)-phospho-ribonucleoside in mRNA + H2O = a 5'-end phospho-adenosine-phospho-ribonucleoside in mRNA + beta-nicotinamide D-ribonucleotide + 2 H(+). The catalysed reaction is NAD(+) + H2O = beta-nicotinamide D-ribonucleotide + AMP + 2 H(+). The enzyme catalyses NADH + H2O = reduced beta-nicotinamide D-ribonucleotide + AMP + 2 H(+). Its function is as follows. mRNA decapping enzyme that specifically removes the nicotinamide adenine dinucleotide (NAD) cap from a subset of mRNAs by hydrolyzing the diphosphate linkage to produce nicotinamide mononucleotide (NMN) and 5' monophosphate mRNA. The NAD-cap is present at the 5'-end of some mRNAs and stabilizes RNA against 5'-processing. Has preference for mRNAs with a 5'-end purine. Catalyzes the hydrolysis of a broad range of dinucleotide pyrophosphates. The sequence is that of NAD-capped RNA hydrolase NudC from Klebsiella pneumoniae subsp. pneumoniae (strain ATCC 700721 / MGH 78578).